A 229-amino-acid chain; its full sequence is MKQVRLLPSAAVRAACALAAAALAGCAQIPREPIVQQPMTAQPPLPVSMQAPGSIFNPGYAGRPLFEDQRPRNIGDILTIVIAENINATKSSGANTNRQGNTDFNVPTAGFLGGLFSKANLSAAGTNKFAATGGASAANTFNGTITVTVTNVLPNGNLVVSGEKQMLINQGNEFVRFSGVVNPNTISGSNSVYSTQVADARIEYSAKGYINEAETMGWLQRFFLNIAPW.

Residues 1-25 (MKQVRLLPSAAVRAACALAAAALAG) form the signal peptide. The N-palmitoyl cysteine moiety is linked to residue C26. C26 carries the S-diacylglycerol cysteine lipid modification.

It belongs to the FlgH family. As to quaternary structure, the basal body constitutes a major portion of the flagellar organelle and consists of four rings (L,P,S, and M) mounted on a central rod.

The protein resides in the cell outer membrane. The protein localises to the bacterial flagellum basal body. In terms of biological role, assembles around the rod to form the L-ring and probably protects the motor/basal body from shearing forces during rotation. In Burkholderia multivorans (strain ATCC 17616 / 249), this protein is Flagellar L-ring protein.